Consider the following 420-residue polypeptide: Gamma-glutamyl phosphate reductase (420 aa).

It belongs to the gamma-glutamyl phosphate reductase family.

Its subcellular location is the cytoplasm. It carries out the reaction L-glutamate 5-semialdehyde + phosphate + NADP(+) = L-glutamyl 5-phosphate + NADPH + H(+). The protein operates within amino-acid biosynthesis; L-proline biosynthesis; L-glutamate 5-semialdehyde from L-glutamate: step 2/2. Functionally, catalyzes the NADPH-dependent reduction of L-glutamate 5-phosphate into L-glutamate 5-semialdehyde and phosphate. The product spontaneously undergoes cyclization to form 1-pyrroline-5-carboxylate. This Streptococcus pneumoniae serotype 2 (strain D39 / NCTC 7466) protein is Gamma-glutamyl phosphate reductase.